Here is a 227-residue protein sequence, read N- to C-terminus: tRNA (guanine-N(7)-)-methyltransferase (227 aa).

The S-adenosyl-L-methionine site is built by E60, E85, D112, and D135. D135 is an active-site residue. Residues K139, D171, and 206–209 (TKFE) each bind substrate.

The protein belongs to the class I-like SAM-binding methyltransferase superfamily. TrmB family.

The enzyme catalyses guanosine(46) in tRNA + S-adenosyl-L-methionine = N(7)-methylguanosine(46) in tRNA + S-adenosyl-L-homocysteine. It participates in tRNA modification; N(7)-methylguanine-tRNA biosynthesis. Catalyzes the formation of N(7)-methylguanine at position 46 (m7G46) in tRNA. This Thiobacillus denitrificans (strain ATCC 25259 / T1) protein is tRNA (guanine-N(7)-)-methyltransferase.